Here is a 212-residue protein sequence, read N- to C-terminus: Protein Thf1 (212 aa).

Residues glutamate 179–lysine 201 adopt a coiled-coil conformation.

This sequence belongs to the THF1 family.

Its function is as follows. May be involved in photosynthetic membrane biogenesis. The chain is Protein Thf1 from Parasynechococcus marenigrum (strain WH8102).